We begin with the raw amino-acid sequence, 1152 residues long: Integrin alpha-M (1152 aa).

Residues 1-16 form the signal peptide; that stretch reads MALRVLLLTALTLCHG. Topologically, residues 17 to 1104 are extracellular; it reads FNLDTENAMT…TKVEPFEVPN (1088 aa). 2 FG-GAP repeats span residues 18–75 and 76–135; these read NLDT…SCEP and IRLQ…QQPQ. Residues Cys66 and Cys73 are joined by a disulfide bond. Asn86 carries an N-linked (GlcNAc...) asparagine glycan. Cys105 and Cys123 form a disulfide bridge. The 179-residue stretch at 150-328 folds into the VWFA domain; that stretch reads DIAFLIDGSG…EALKTIQNQL (179 aa). Residue Asn240 is glycosylated (N-linked (GlcNAc...) asparagine). FG-GAP repeat units follow at residues 339–390, 391–442, 443–503, 506–564, and 569–629; these read QTGS…STFI, NMTR…TGMW, ESNA…RARW, DAVL…SGIS, and QRIA…FNPR. N-linked (GlcNAc...) asparagine glycosylation occurs at Asn391. Ca(2+)-binding residues include Asp465, Asp467, Asn469, Asp473, Asp529, Asn531, Asp533, Asp537, Asp592, Asp596, and Asp600. Residue Asn469 is glycosylated (N-linked (GlcNAc...) asparagine). Cys654 and Cys711 form a disulfide bridge. N-linked (GlcNAc...) asparagine glycans are attached at residues Asn692, Asn696, and Asn734. The cysteines at positions 770 and 776 are disulfide-linked. N-linked (GlcNAc...) asparagine glycosylation is present at Asn801. Cys847 and Cys864 are joined by a disulfide. Asn880, Asn900, Asn911, Asn940, Asn946, Asn978, Asn993, and Asn1021 each carry an N-linked (GlcNAc...) asparagine glycan. Cystine bridges form between Cys998–Cys1022 and Cys1027–Cys1032. N-linked (GlcNAc...) asparagine glycosylation is found at Asn1044, Asn1050, and Asn1075. The chain crosses the membrane as a helical span at residues 1105 to 1128; that stretch reads PLPLIVGSSVGGLLLLALITAALY. Over 1129 to 1152 the chain is Cytoplasmic; that stretch reads KLGFFKRQYKDMMSEGGPPGAEPQ. A GFFKR motif motif is present at residues 1131-1135; it reads GFFKR.

It belongs to the integrin alpha chain family. As to quaternary structure, heterodimer of an alpha and a beta subunit. ITGAM associates with ITGB2. Found in a complex with CD177 and ITGB2/CD18. Interacts with JAM3. Interacts with THBD. Interacts with complement factor H/CFH; this interaction mediates adhesion of neutrophils to pathogens leading to pathogen clearance. Interacts with TMEM268; this interaction inhibits ITGAM degradation via the endosome-lysosome pathway. Predominantly expressed in monocytes and granulocytes. Expressed in neutrophils (at protein level).

The protein localises to the cell membrane. The protein resides in the membrane raft. Its function is as follows. Integrin ITGAM/ITGB2 is implicated in various adhesive interactions of monocytes, macrophages and granulocytes as well as in mediating the uptake of complement-coated particles and pathogens. It is identical with CR-3, the receptor for the iC3b fragment of the third complement component. It probably recognizes the R-G-D peptide in C3b. Integrin ITGAM/ITGB2 is also a receptor for fibrinogen, factor X and ICAM1. It recognizes P1 and P2 peptides of fibrinogen gamma chain. Regulates neutrophil migration. In association with beta subunit ITGB2/CD18, required for CD177-PRTN3-mediated activation of TNF primed neutrophils. May regulate phagocytosis-induced apoptosis in extravasated neutrophils. May play a role in mast cell development. Required with TYROBP/DAP12 in microglia to control production of microglial superoxide ions which promote the neuronal apoptosis that occurs during brain development. In Homo sapiens (Human), this protein is Integrin alpha-M (ITGAM).